A 42-amino-acid chain; its full sequence is Photosystem I reaction center subunit IX (42 aa).

Residues 7 to 27 (YLSTAPVLATLWFGFLAGLLI) form a helical membrane-spanning segment.

This sequence belongs to the PsaJ family.

The protein localises to the plastid. It is found in the chloroplast thylakoid membrane. Its function is as follows. May help in the organization of the PsaE and PsaF subunits. In Huperzia lucidula (Shining clubmoss), this protein is Photosystem I reaction center subunit IX.